Reading from the N-terminus, the 549-residue chain is Glucose-6-phosphate isomerase (549 aa).

E353 serves as the catalytic Proton donor. Active-site residues include H384 and K510. Positions 523-549 (AEPPAAQSDSSTDALVRRYRSERGRTA) are disordered. The span at 537–549 (LVRRYRSERGRTA) shows a compositional bias: basic and acidic residues.

Belongs to the GPI family.

It is found in the cytoplasm. It carries out the reaction alpha-D-glucose 6-phosphate = beta-D-fructose 6-phosphate. Its pathway is carbohydrate biosynthesis; gluconeogenesis. The protein operates within carbohydrate degradation; glycolysis; D-glyceraldehyde 3-phosphate and glycerone phosphate from D-glucose: step 2/4. Its function is as follows. Catalyzes the reversible isomerization of glucose-6-phosphate to fructose-6-phosphate. The chain is Glucose-6-phosphate isomerase from Mycolicibacterium gilvum (strain PYR-GCK) (Mycobacterium gilvum (strain PYR-GCK)).